We begin with the raw amino-acid sequence, 840 residues long: Leucine-zipper-like transcriptional regulator 1 (840 aa).

Ala-2 bears the N-acetylalanine mark. Kelch repeat units follow at residues 79–128 (AIYV…VYGS), 130–185 (MFVF…VYSD), 187–238 (LWIF…VCRD), 239–285 (KMFV…QRRY), 295–341 (HLYV…PERA), and 399–450 (AMYI…FVLG). BTB domains are found at residues 443–537 (CDVE…KYPR) and 667–736 (CDIT…NMPP).

Belongs to the LZTR1 family. Homodimer. Component of the BCR(LZTR1) E3 ubiquitin ligase complex, at least composed of CUL3, LZTR1 and RBX1. Interacts with Ras (K-Ras/KRAS, N-Ras/NRAS and H-Ras/HRAS). Interacts with RAF1. Interacts with SHOC2. Interacts with PPP1CB. In terms of processing, phosphorylated on tyrosine upon induction of apoptosis, leading to its degradation by the proteasome.

It localises to the endomembrane system. It is found in the recycling endosome. The protein localises to the golgi apparatus. The protein operates within protein modification; protein ubiquitination. Substrate-specific adapter of a BCR (BTB-CUL3-RBX1) E3 ubiquitin-protein ligase complex that mediates ubiquitination of Ras (K-Ras/KRAS, N-Ras/NRAS and H-Ras/HRAS). Is a negative regulator of RAS-MAPK signaling that acts by controlling Ras levels and decreasing Ras association with membranes. The chain is Leucine-zipper-like transcriptional regulator 1 from Homo sapiens (Human).